Reading from the N-terminus, the 246-residue chain is MKSFYFGRGALASTGGCVVLAVAALMFVFLPALSGGGHGHVRLGSWGGVALTNAPDSLFSQQYSALAQTAERYNLYPKDAQEREGMDRRVLRAAFRAAVVQLAGTEQTKQSGFTLSEELLDREVLSFYADADGTYSPQRYQGTPEHVRLSQRKKMRDSLLSDQYLYHLFGKETGRGGLKLNSRELRFVQDMAKKERSFRYVVLGEERFPAERVSRTGKSMPTFLPCITFPCSPTPRKRTRAARHAL.

A helical membrane pass occupies residues 7–29 (GRGALASTGGCVVLAVAALMFVF).

Its subcellular location is the membrane. This is an uncharacterized protein from Treponema pallidum (strain Nichols).